The chain runs to 354 residues: Protein-arginine kinase (354 aa).

Residues 24 to 254 (IVLSSRIRLA…QQIIQQEKMA (231 aa)) form the Phosphagen kinase C-terminal domain. Residues 27 to 31 (SSRIR), His-92, Arg-125, 176 to 180 (RASVM), and 207 to 212 (RGIYGE) contribute to the ATP site. The RDXXRA motif of the pArg binding pocket involved in allosteric regulation signature appears at 337–342 (RDYRRA).

This sequence belongs to the ATP:guanido phosphotransferase family.

It catalyses the reaction L-arginyl-[protein] + ATP = N(omega)-phospho-L-arginyl-[protein] + ADP + H(+). With respect to regulation, appears to be allosterically activated by the binding of pArg-containing polypeptides to the pArg-binding pocket localized in the C-terminal domain of McsB. Catalyzes the specific phosphorylation of arginine residues in a large number of proteins. Is part of the bacterial stress response system. Protein arginine phosphorylation has a physiologically important role and is involved in the regulation of many critical cellular processes, such as protein homeostasis, motility, competence, and stringent and stress responses, by regulating gene expression and protein activity. This Bacillus cereus (strain AH187) protein is Protein-arginine kinase.